The primary structure comprises 191 residues: Adenylate kinase (191 aa).

10-15 contacts ATP; the sequence is GAGKGT. The NMP stretch occupies residues 30 to 59; it reads STGDIFRANVTEGTPLGVEAKRYMDAGEYV. Residues threonine 31, arginine 36, 57-59, 85-88, and glutamine 92 each bind AMP; these read EYV and GYPR. Residues 126 to 136 form an LID region; sequence QRAQVEGRADD. Position 127 (arginine 127) interacts with ATP. Positions 133 and 144 each coordinate AMP. Glycine 172 serves as a coordination point for ATP.

It belongs to the adenylate kinase family. In terms of assembly, monomer.

Its subcellular location is the cytoplasm. It carries out the reaction AMP + ATP = 2 ADP. The protein operates within purine metabolism; AMP biosynthesis via salvage pathway; AMP from ADP: step 1/1. Its function is as follows. Catalyzes the reversible transfer of the terminal phosphate group between ATP and AMP. Plays an important role in cellular energy homeostasis and in adenine nucleotide metabolism. This chain is Adenylate kinase, found in Nocardioides sp. (strain ATCC BAA-499 / JS614).